A 213-amino-acid polypeptide reads, in one-letter code: Ribosomal RNA large subunit methyltransferase E (213 aa).

S-adenosyl-L-methionine contacts are provided by glycine 68, tryptophan 70, aspartate 88, aspartate 104, and aspartate 127. Lysine 167 (proton acceptor) is an active-site residue.

Belongs to the class I-like SAM-binding methyltransferase superfamily. RNA methyltransferase RlmE family.

The protein localises to the cytoplasm. The enzyme catalyses uridine(2552) in 23S rRNA + S-adenosyl-L-methionine = 2'-O-methyluridine(2552) in 23S rRNA + S-adenosyl-L-homocysteine + H(+). In terms of biological role, specifically methylates the uridine in position 2552 of 23S rRNA at the 2'-O position of the ribose in the fully assembled 50S ribosomal subunit. This Neorickettsia sennetsu (strain ATCC VR-367 / Miyayama) (Ehrlichia sennetsu) protein is Ribosomal RNA large subunit methyltransferase E.